We begin with the raw amino-acid sequence, 297 residues long: Myoblast determination protein 1 homolog (297 aa).

The disordered stretch occupies residues Lys-52–Pro-76. Positions Asp-101 to Leu-152 constitute a bHLH domain. 2 disordered regions span residues Ser-171–Ser-221 and Cys-243–Leu-297. Polar residues-rich tracts occupy residues Ser-174–Ser-184 and Cys-258–Leu-297.

As to quaternary structure, efficient DNA binding requires dimerization with another bHLH protein. Seems to form active heterodimers with ITF-2.

The protein resides in the nucleus. In terms of biological role, acts as a transcriptional activator that promotes transcription of muscle-specific target genes and plays a role in muscle differentiation. Induces fibroblasts to differentiate into myoblasts. Interacts with and is inhibited by the twist protein. This interaction probably involves the basic domains of both proteins. In Coturnix japonica (Japanese quail), this protein is Myoblast determination protein 1 homolog (MYOD1).